A 3890-amino-acid polypeptide reads, in one-letter code: Extracellular matrix-binding protein EbhB (3890 aa).

The signal sequence occupies residues 1 to 39; the sequence is MNYRDKIQKFSIRKYTVGTFSTVIATLVFLGFNTSQAHA. Residues 41-59 are compositionally biased toward polar residues; the sequence is ETNQPASVVKQKQQSNNEQ. 4 disordered regions span residues 41 to 152, 249 to 277, 1347 to 1372, and 2418 to 2438; these read ETNQ…GNDN, MPQR…PRSV, NEKA…NATT, and TITP…TLTA. Positions 65–78 are enriched in low complexity; that stretch reads SQVQNSQNSQNSQS. Over residues 79–117 the composition is skewed to polar residues; it reads LSATHENEQPNNSQANLVNQKVAQSSTTNDEQPASQNVN. A compositionally biased stretch (basic and acidic residues) spans 130–140; the sequence is PDKEESKHKQN. 4 stretches are compositionally biased toward polar residues: residues 141-151, 250-266, 1360-1372, and 2427-2438; these read ESQSANKNGND, PQRQ…QTRS, YRTT…NATT, and HSVSSNPSTLTA. FIVAR domains follow at residues 2524–2580, 2610–2666, 2687–2750, 2780–2836, 2864–2919, 2947–3002, 3030–3085, 3154–3212, 3280–3339, 3407–3465, 3533–3591, 3659–3717, and 3785–3843; these read AKNH…VSDA, SKNN…ISDE, DTHA…VQSA, AKTK…IAAE, AKTQ…IRQN, AKNQ…INTN, AKTQ…INDK, AMTK…VNQK, AMTG…VNNA, AMGN…VNRA, AMGN…VTEA, AMNT…ITQK, and AMAN…VEAA.

In Staphylococcus aureus (strain N315), this protein is Extracellular matrix-binding protein EbhB (ebhB).